Reading from the N-terminus, the 434-residue chain is Chaperone SurA (434 aa).

Residues 1-29 form the signal peptide; sequence MKTLRLNFRSAILKALGALLLLQGCLAHA. PpiC domains follow at residues 180 to 281 and 290 to 389; these read AEEY…AMLE and VEQS…QVQD.

The protein resides in the periplasm. It carries out the reaction [protein]-peptidylproline (omega=180) = [protein]-peptidylproline (omega=0). Functionally, chaperone involved in the correct folding and assembly of outer membrane proteins. Recognizes specific patterns of aromatic residues and the orientation of their side chains, which are found more frequently in integral outer membrane proteins. May act in both early periplasmic and late outer membrane-associated steps of protein maturation. In Hahella chejuensis (strain KCTC 2396), this protein is Chaperone SurA.